Reading from the N-terminus, the 932-residue chain is Protocadherin gamma-A9 (932 aa).

The first 28 residues, 1 to 28, serve as a signal peptide directing secretion; that stretch reads MAAPTKCQLRGRLVLLCSLLGMLWEARA. 6 consecutive Cadherin domains span residues 29-133, 134-242, 243-347, 348-452, 453-562, and 570-683; these read SQIR…APKF, QAES…APVF, AQRI…RPEV, TITS…PPAF, SQAS…APEI, and DGST…IPAD. Residues 29-692 are Extracellular-facing; it reads SQIRYSVPEE…DLEASDLTLY (664 aa). N-linked (GlcNAc...) asparagine glycans are attached at residues Asn-47 and Asn-127. N-linked (GlcNAc...) asparagine glycans are attached at residues Asn-389, Asn-419, and Asn-545. The chain crosses the membrane as a helical span at residues 693 to 713; the sequence is LVVAVAVVSCVFLTFVITLLA. Topologically, residues 714–932 are cytoplasmic; it reads LRLRHWHSSH…KKKSGKKEKK (219 aa). Disordered stretches follow at residues 803–841 and 902–932; these read DTPLVPQAPPNTDWRFSQAQRPGTSGSQNGDDTGTWPNN and ATLTNAAGKRDGKAPAGGNGNKKKSGKKEKK. Over residues 816 to 841 the composition is skewed to polar residues; that stretch reads WRFSQAQRPGTSGSQNGDDTGTWPNN. A compositionally biased stretch (basic residues) spans 922–932; it reads NKKKSGKKEKK.

The protein localises to the cell membrane. In terms of biological role, potential calcium-dependent cell-adhesion protein. May be involved in the establishment and maintenance of specific neuronal connections in the brain. The polypeptide is Protocadherin gamma-A9 (PCDHGA9) (Homo sapiens (Human)).